The chain runs to 286 residues: 4-diphosphocytidyl-2-C-methyl-D-erythritol kinase (286 aa).

Lys11 is a catalytic residue. Residue 93-103 coordinates ATP; that stretch reads PFGAGLGGGSS. The active site involves Asp135.

This sequence belongs to the GHMP kinase family. IspE subfamily.

The catalysed reaction is 4-CDP-2-C-methyl-D-erythritol + ATP = 4-CDP-2-C-methyl-D-erythritol 2-phosphate + ADP + H(+). It participates in isoprenoid biosynthesis; isopentenyl diphosphate biosynthesis via DXP pathway; isopentenyl diphosphate from 1-deoxy-D-xylulose 5-phosphate: step 3/6. In terms of biological role, catalyzes the phosphorylation of the position 2 hydroxy group of 4-diphosphocytidyl-2C-methyl-D-erythritol. This Chlorobium phaeobacteroides (strain BS1) protein is 4-diphosphocytidyl-2-C-methyl-D-erythritol kinase.